We begin with the raw amino-acid sequence, 451 residues long: CBL-interacting protein kinase 22 (451 aa).

The Protein kinase domain maps to 26 to 301 (YELGRVLGQG…IGEIFDHPWL (276 aa)). Residues 32-40 (LGQGASSKV) and lysine 55 contribute to the ATP site. The active-site Proton acceptor is aspartate 165. The tract at residues 183 to 216 (DFGLSAFADADQHLGATDGLAATHCGSPAYVAPE) is activation loop. One can recognise an NAF domain in the interval 330–356 (ELEQAMELNAFDIIGFASGCDLSGLIG). Positions 361 to 389 (RVRFVLPGGDSKSVLDKVEKLGREEGLVV) are PPI.

Belongs to the protein kinase superfamily. CAMK Ser/Thr protein kinase family. SNF1 subfamily. Requires Mn(2+) as cofactor.

The catalysed reaction is L-seryl-[protein] + ATP = O-phospho-L-seryl-[protein] + ADP + H(+). It catalyses the reaction L-threonyl-[protein] + ATP = O-phospho-L-threonyl-[protein] + ADP + H(+). Functionally, CIPK serine-threonine protein kinases interact with CBL proteins. Binding of a CBL protein to the regulatory NAF domain of CIPK protein lead to the activation of the kinase in a calcium-dependent manner. The chain is CBL-interacting protein kinase 22 (CIPK22) from Oryza sativa subsp. japonica (Rice).